A 542-amino-acid chain; its full sequence is CTP synthase (542 aa).

The tract at residues 1–265 (MARYVFITGG…DSEVLAAFGI (265 aa)) is amidoligase domain. S13 lines the CTP pocket. S13 provides a ligand contact to UTP. ATP-binding positions include 14–19 (SLGKGI) and D71. Residues D71 and E139 each coordinate Mg(2+). Residues 146 to 148 (DIE), 186 to 191 (KTKPTQ), and K222 each bind CTP. UTP is bound by residues 186 to 191 (KTKPTQ) and K222. A Glutamine amidotransferase type-1 domain is found at 291 to 541 (TIAIVGKYTG…VEAAVEQSRL (251 aa)). G353 is an L-glutamine binding site. Residue C380 is the Nucleophile; for glutamine hydrolysis of the active site. L-glutamine is bound by residues 381–384 (FGMQ), E404, and R469. Catalysis depends on residues H514 and E516.

This sequence belongs to the CTP synthase family. In terms of assembly, homotetramer.

It catalyses the reaction UTP + L-glutamine + ATP + H2O = CTP + L-glutamate + ADP + phosphate + 2 H(+). It carries out the reaction L-glutamine + H2O = L-glutamate + NH4(+). The enzyme catalyses UTP + NH4(+) + ATP = CTP + ADP + phosphate + 2 H(+). It participates in pyrimidine metabolism; CTP biosynthesis via de novo pathway; CTP from UDP: step 2/2. With respect to regulation, allosterically activated by GTP, when glutamine is the substrate; GTP has no effect on the reaction when ammonia is the substrate. The allosteric effector GTP functions by stabilizing the protein conformation that binds the tetrahedral intermediate(s) formed during glutamine hydrolysis. Inhibited by the product CTP, via allosteric rather than competitive inhibition. Its function is as follows. Catalyzes the ATP-dependent amination of UTP to CTP with either L-glutamine or ammonia as the source of nitrogen. Regulates intracellular CTP levels through interactions with the four ribonucleotide triphosphates. The sequence is that of CTP synthase from Agrobacterium fabrum (strain C58 / ATCC 33970) (Agrobacterium tumefaciens (strain C58)).